Reading from the N-terminus, the 513-residue chain is ATP synthase subunit alpha (513 aa).

169–176 (GDRQCGKT) contributes to the ATP binding site.

This sequence belongs to the ATPase alpha/beta chains family. As to quaternary structure, F-type ATPases have 2 components, CF(1) - the catalytic core - and CF(0) - the membrane proton channel. CF(1) has five subunits: alpha(3), beta(3), gamma(1), delta(1), epsilon(1). CF(0) has three main subunits: a(1), b(2) and c(9-12). The alpha and beta chains form an alternating ring which encloses part of the gamma chain. CF(1) is attached to CF(0) by a central stalk formed by the gamma and epsilon chains, while a peripheral stalk is formed by the delta and b chains.

The protein resides in the cell inner membrane. It carries out the reaction ATP + H2O + 4 H(+)(in) = ADP + phosphate + 5 H(+)(out). Functionally, produces ATP from ADP in the presence of a proton gradient across the membrane. The alpha chain is a regulatory subunit. The chain is ATP synthase subunit alpha from Burkholderia orbicola (strain AU 1054).